Reading from the N-terminus, the 96-residue chain is Putative translation initiation factor IF-1, chloroplastic (96 aa).

The 40-residue stretch at 18–57 (INYVSGKIRHSFIRILPGDRVKIEVSPYDSTKGRIIYRLH) folds into the S1-like domain.

This sequence belongs to the IF-1 family. As to quaternary structure, component of the 30S ribosomal translation pre-initiation complex which assembles on the 30S ribosome in the order IF-2 and IF-3, IF-1 and N-formylmethionyl-tRNA(fMet); mRNA recruitment can occur at any time during PIC assembly.

The protein resides in the plastid. Its subcellular location is the chloroplast. Functionally, one of the essential components for the initiation of protein synthesis. Stabilizes the binding of IF-2 and IF-3 on the 30S subunit to which N-formylmethionyl-tRNA(fMet) subsequently binds. Helps modulate mRNA selection, yielding the 30S pre-initiation complex (PIC). Upon addition of the 50S ribosomal subunit IF-1, IF-2 and IF-3 are released leaving the mature 70S translation initiation complex. This is Putative translation initiation factor IF-1, chloroplastic (infA) from Nicotiana tabacum (Common tobacco).